We begin with the raw amino-acid sequence, 452 residues long: UPF0210 protein Ccel_1722 (452 aa).

The protein belongs to the UPF0210 family. Homodimer.

This Ruminiclostridium cellulolyticum (strain ATCC 35319 / DSM 5812 / JCM 6584 / H10) (Clostridium cellulolyticum) protein is UPF0210 protein Ccel_1722.